Consider the following 148-residue polypeptide: Small ribosomal subunit protein uS12 (148 aa).

This sequence belongs to the universal ribosomal protein uS12 family. As to quaternary structure, part of the 30S ribosomal subunit.

Functionally, with S4 and S5 plays an important role in translational accuracy. Located at the interface of the 30S and 50S subunits. The sequence is that of Small ribosomal subunit protein uS12 from Methanocaldococcus jannaschii (strain ATCC 43067 / DSM 2661 / JAL-1 / JCM 10045 / NBRC 100440) (Methanococcus jannaschii).